The following is a 337-amino-acid chain: Ferrochelatase (337 aa).

Fe cation contacts are provided by His189 and Glu293.

This sequence belongs to the ferrochelatase family.

Its subcellular location is the cytoplasm. The catalysed reaction is heme b + 2 H(+) = protoporphyrin IX + Fe(2+). It functions in the pathway porphyrin-containing compound metabolism; protoheme biosynthesis; protoheme from protoporphyrin-IX: step 1/1. In terms of biological role, catalyzes the ferrous insertion into protoporphyrin IX. In Pseudomonas entomophila (strain L48), this protein is Ferrochelatase.